The sequence spans 59 residues: Sec-independent protein translocase protein TatA (59 aa).

The helical transmembrane segment at 1–21 (MGRLGLTEILVIVGIVILLFG) threads the bilayer.

It belongs to the TatA/E family. Forms a complex with TatC.

The protein localises to the cell inner membrane. In terms of biological role, part of the twin-arginine translocation (Tat) system that transports large folded proteins containing a characteristic twin-arginine motif in their signal peptide across membranes. TatA could form the protein-conducting channel of the Tat system. The chain is Sec-independent protein translocase protein TatA from Flavobacterium johnsoniae (strain ATCC 17061 / DSM 2064 / JCM 8514 / BCRC 14874 / CCUG 350202 / NBRC 14942 / NCIMB 11054 / UW101) (Cytophaga johnsonae).